Consider the following 201-residue polypeptide: Segregation and condensation protein B (201 aa).

It belongs to the ScpB family. As to quaternary structure, homodimer. Homodimerization may be required to stabilize the binding of ScpA to the Smc head domains. Component of a cohesin-like complex composed of ScpA, ScpB and the Smc homodimer, in which ScpA and ScpB bind to the head domain of Smc. The presence of the three proteins is required for the association of the complex with DNA.

It is found in the cytoplasm. Its function is as follows. Participates in chromosomal partition during cell division. May act via the formation of a condensin-like complex containing Smc and ScpA that pull DNA away from mid-cell into both cell halves. This Enterococcus faecalis (strain ATCC 700802 / V583) protein is Segregation and condensation protein B.